Consider the following 485-residue polypeptide: Hydrogenase transcriptional regulatory protein HoxA (485 aa).

Positions 6–120 (TILVVDDEVR…QLVETVKEAV (115 aa)) constitute a Response regulatory domain. A 4-aspartylphosphate modification is found at Asp54. One can recognise a Sigma-54 factor interaction domain in the interval 166–392 (STESPMHAVI…ELQNEIQRMA (227 aa)). ATP contacts are provided by residues 192–199 (GESGTGKE) and 264–273 (EIGETSPAFQ). Residues 404–426 (PLLGRRNGKRSAPLPAHGRLNGS) form a disordered region. The segment at residues 451-470 (NISRVASELGLSRVGLRNKL) is a DNA-binding region (H-T-H motif).

It localises to the cytoplasm. Functionally, probable member of the two-component regulatory system involved in the regulation of the hydrogenase activity. HoxA is probably phosphorylated by a sensory component (which could be HoxX) and then acts in conjunction with sigma-54 as a transcriptional activator. The polypeptide is Hydrogenase transcriptional regulatory protein HoxA (hoxA) (Bradyrhizobium diazoefficiens (strain JCM 10833 / BCRC 13528 / IAM 13628 / NBRC 14792 / USDA 110)).